The chain runs to 309 residues: MDLLVNKYQPSEIQDIVGNEATMELVSLMIESRDMPHLLFTGPPGTGKTTCAKILARRLLGNKEGLLELNASDERGIDTVRTTIKSFAQRRVKDCEFKIIILDEADSMTTTAQQAMRRVMEIHSSECRFILICNVFTKIFEPIQSRCAILRFDRIEQSVILKRLKEISEGEGIRITAEALDLVVELSDGDMRQSLNILQACINSPGTVDQDYIIKIIGLPSPKRIEKVLQRLLKREVEEALEMFDEIWEEKFDPLDLINSFFRAAKNMESYELLKVIGLANLRISEGVNSRLQFYGMFWDILDMGSKRL.

ATP-binding positions include V5, V17, 42–50, N134, and R192; that span reads GPPGTGKTT.

Belongs to the activator 1 small subunits family. In terms of assembly, component of the replication factor C (RFC) complex.

The protein localises to the nucleus. Component of ATP-dependent clamp loader (RFC and RFC-like) complexes for DNA clamps. During a clamp loading circle, the RFC:clamp complex binds to DNA and the recognition of the double-stranded/single-stranded junction stimulates ATP hydrolysis by RFC. The complex presumably provides bipartite ATP sites in which one subunit supplies a catalytic site for hydrolysis of ATP bound to the neighboring subunit. Dissociation of RFC from the clamp leaves the clamp encircling DNA. Component of the replication factor C (RFC or activator 1) complex which acts during elongation of primed DNA templates by DNA polymerase delta and epsilon. RFC has an essential but redundant activity in sister chromatid cohesion establishment. This Encephalitozoon cuniculi (strain GB-M1) (Microsporidian parasite) protein is Replication factor C subunit 4 (RFC4).